Consider the following 121-residue polypeptide: Neuropeptide-like protein 7 (121 aa).

The signal sequence occupies residues 1–22 (MYIKAALLIVVLFGVASQITSA).

Its function is as follows. May regulate lifespan in response to food availability and oxidative stress. In Caenorhabditis elegans, this protein is Neuropeptide-like protein 7.